Here is a 63-residue protein sequence, read N- to C-terminus: Cytochrome c oxidase subunit 5C (63 aa).

A helical membrane pass occupies residues 16–34 (VVKEICIGLTLGLVAGGLW).

It belongs to the cytochrome c oxidase subunit 5C family.

The protein resides in the mitochondrion inner membrane. In terms of biological role, this protein is one of the nuclear-coded polypeptide chains of cytochrome c oxidase, the terminal oxidase in mitochondrial electron transport. The protein is Cytochrome c oxidase subunit 5C (COX5C) of Oryza sativa subsp. japonica (Rice).